The sequence spans 257 residues: Type III pantothenate kinase (257 aa).

6–13 contacts ATP; the sequence is EQGNTNTL. 107–110 provides a ligand contact to substrate; it reads GADR. Aspartate 109 functions as the Proton acceptor in the catalytic mechanism. A K(+)-binding site is contributed by aspartate 129. Threonine 132 provides a ligand contact to ATP. Threonine 184 provides a ligand contact to substrate.

It belongs to the type III pantothenate kinase family. As to quaternary structure, homodimer. NH4(+) is required as a cofactor. K(+) serves as cofactor.

It is found in the cytoplasm. It carries out the reaction (R)-pantothenate + ATP = (R)-4'-phosphopantothenate + ADP + H(+). It functions in the pathway cofactor biosynthesis; coenzyme A biosynthesis; CoA from (R)-pantothenate: step 1/5. Functionally, catalyzes the phosphorylation of pantothenate (Pan), the first step in CoA biosynthesis. In Phenylobacterium zucineum (strain HLK1), this protein is Type III pantothenate kinase.